Consider the following 196-residue polypeptide: UPF0316 protein LBL_2483 (196 aa).

3 helical membrane passes run 12-32 (YCVL…IGTI), 44-64 (IAAS…TQVI), and 70-90 (ALCY…GMIL).

It belongs to the UPF0316 family.

The protein localises to the cell membrane. In Leptospira borgpetersenii serovar Hardjo-bovis (strain L550), this protein is UPF0316 protein LBL_2483.